The primary structure comprises 377 residues: UPF0754 membrane protein LMOf2365_2257 (377 aa).

The next 2 helical transmembrane spans lie at 1–21 (MSVL…GAMT) and 357–377 (YLGG…AMWI).

Belongs to the UPF0754 family.

It localises to the cell membrane. The chain is UPF0754 membrane protein LMOf2365_2257 from Listeria monocytogenes serotype 4b (strain F2365).